We begin with the raw amino-acid sequence, 59 residues long: Small ribosomal subunit protein bS21 (59 aa).

The protein belongs to the bacterial ribosomal protein bS21 family.

The sequence is that of Small ribosomal subunit protein bS21 from Acholeplasma laidlawii (strain PG-8A).